We begin with the raw amino-acid sequence, 424 residues long: Histidine--tRNA ligase (424 aa).

This sequence belongs to the class-II aminoacyl-tRNA synthetase family. As to quaternary structure, homodimer.

Its subcellular location is the cytoplasm. It carries out the reaction tRNA(His) + L-histidine + ATP = L-histidyl-tRNA(His) + AMP + diphosphate + H(+). The chain is Histidine--tRNA ligase from Shigella boydii serotype 18 (strain CDC 3083-94 / BS512).